Here is a 317-residue protein sequence, read N- to C-terminus: CXXC-type zinc finger protein 5 (317 aa).

A compositionally biased stretch (low complexity) spans 1-49 (MSSLSSGPQDTGGSSSSSSNGSSGSGPKAGVADKSAAVAAAAPASVADD). The disordered stretch occupies residues 1–96 (MSSLSSGPQD…GSGGGSMMGG (96 aa)). Positions 83-94 (GGSGGSGGGSMM) are enriched in gly residues. The CXXC-type zinc-finger motif lies at 251 to 292 (GKKKRKRCGMCAPCRRRINCEQCSSCRNRKTGHQICKFRKCE). The short motif at 252-257 (KKKRKR) is the Nuclear localization signal element. Zn(2+) is bound by residues Cys-258, Cys-261, Cys-264, Cys-270, Cys-273, Cys-276, Cys-286, and Cys-291.

As to quaternary structure, interacts with DVL1. Interacts with RBPJ.

It is found in the nucleus. It localises to the cytoplasm. May indirectly participate in activation of the NF-kappa-B and MAPK pathways. Acts as a mediator of BMP4-mediated modulation of canonical Wnt signaling activity in neural stem cells. Required for DNA damage-induced ATM phosphorylation, p53 activation and cell cycle arrest. Involved in myelopoiesis. Binds to the oxygen responsive element of COX4I2 and represses its transcription under hypoxia conditions (4% oxygen), as well as normoxia conditions (20% oxygen). May repress COX4I2 transactivation induced by CHCHD2 and RBPJ. Binds preferentially to DNA containing cytidine-phosphate-guanosine (CpG) dinucleotides over CpH (H=A, T, and C), hemimethylated-CpG and hemimethylated-hydroxymethyl-CpG. This Bos taurus (Bovine) protein is CXXC-type zinc finger protein 5 (CXXC5).